Reading from the N-terminus, the 462-residue chain is Polygalacturonase (462 aa).

A signal peptide spans 1 to 22 (MALTRLLLPISILWFCFYSSHT). The N-linked (GlcNAc...) asparagine glycan is linked to Asn173. Asp278 serves as the catalytic Proton donor. Cys280 and Cys297 are disulfide-bonded. Asn294 carries N-linked (GlcNAc...) asparagine glycosylation. The active site involves His301. N-linked (GlcNAc...) asparagine glycosylation occurs at Asn358. 2 disulfides stabilise this stretch: Cys407–Cys413 and Cys435–Cys460.

It belongs to the glycosyl hydrolase 28 family.

It is found in the secreted. The protein localises to the cell wall. It catalyses the reaction (1,4-alpha-D-galacturonosyl)n+m + H2O = (1,4-alpha-D-galacturonosyl)n + (1,4-alpha-D-galacturonosyl)m.. Acts in concert with the pectinesterase, in the ripening process. Is involved in cell wall metabolism, specifically in polyuronide degradation. The polypeptide is Polygalacturonase (Persea americana (Avocado)).